Consider the following 662-residue polypeptide: Protein Aster-C (662 aa).

Positions 1-34 (MEGAPTVRQVMNEGDSSLATDLQEDVEENPSPTV) are disordered. Residues 69–136 (EEYRRQFTHL…KNITFMTKEK (68 aa)) enclose the GRAM domain. Disordered regions lie at residues 212-237 (SIED…EKLS) and 249-284 (RVSE…LPTL). Basic and acidic residues predominate over residues 265–276 (LGKEESQNEKQT). In terms of domain architecture, VASt spans 326-497 (HGRLFINRIF…DLLIEESVLN (172 aa)). Residues 557 to 577 (LIVVMSIFVLLLVLLNVTLFL) form a helical membrane-spanning segment.

It localises to the endoplasmic reticulum membrane. The protein localises to the cell membrane. Functionally, cholesterol transporter that mediates non-vesicular transport of cholesterol from the plasma membrane (PM) to the endoplasmic reticulum (ER). Contains unique domains for binding cholesterol and the PM, thereby serving as a molecular bridge for the transfer of cholesterol from the PM to the ER. Plays a crucial role in cholesterol homeostasis and has the unique ability to localize to the PM based on the level of membrane cholesterol. In lipid-poor conditions localizes to the ER membrane and in response to excess cholesterol in the PM is recruited to the endoplasmic reticulum-plasma membrane contact sites (EPCS) which is mediated by the GRAM domain. At the EPCS, the sterol-binding VASt/ASTER domain binds to the cholesterol in the PM and facilitates its transfer from the PM to ER. The protein is Protein Aster-C (GRAMD1C) of Homo sapiens (Human).